A 419-amino-acid polypeptide reads, in one-letter code: AT-rich binding protein (419 aa).

The segment at 29–52 (IVCHTCQEELQTQDAFWKHIQDEH) adopts a C2H2-type 1 zinc-finger fold. The tract at residues 121-179 (LHEAQHQQQQQQQQHQQQQQQQQHQQQQQHQHHQHQQQQQHLHQQQQQQQQQQRDAAKE) is disordered. Low complexity-rich tracts occupy residues 126-149 (HQQQQQQQQHQQQQQQQQHQQQQQ) and 156-173 (QQQQQHLHQQQQQQQQQQ). 2 consecutive C2H2-type zinc fingers follow at residues 352 to 376 (YVCDYGTCGIKFKYKSRMELHRVVH) and 382 to 405 (FNCDMCSASFKQSCNLSTHRKKKH).

The protein localises to the nucleus. In terms of biological role, may be a transcription factor for genes having (A+T) stretches in their promoter and/or enhancer regions. Binds to AT rich DNA. The polypeptide is AT-rich binding protein (Drosophila grimshawi (Hawaiian fruit fly)).